A 466-amino-acid polypeptide reads, in one-letter code: 3-isopropylmalate dehydratase large subunit (466 aa).

3 residues coordinate [4Fe-4S] cluster: cysteine 347, cysteine 407, and cysteine 410.

This sequence belongs to the aconitase/IPM isomerase family. LeuC type 1 subfamily. In terms of assembly, heterodimer of LeuC and LeuD. The cofactor is [4Fe-4S] cluster.

It carries out the reaction (2R,3S)-3-isopropylmalate = (2S)-2-isopropylmalate. It functions in the pathway amino-acid biosynthesis; L-leucine biosynthesis; L-leucine from 3-methyl-2-oxobutanoate: step 2/4. In terms of biological role, catalyzes the isomerization between 2-isopropylmalate and 3-isopropylmalate, via the formation of 2-isopropylmaleate. The chain is 3-isopropylmalate dehydratase large subunit from Pectobacterium atrosepticum (strain SCRI 1043 / ATCC BAA-672) (Erwinia carotovora subsp. atroseptica).